A 351-amino-acid polypeptide reads, in one-letter code: Protein-glutamate methylesterase/protein-glutamine glutaminase 2 (351 aa).

The Response regulatory domain occupies 4–121 (KVLVVDDSTL…PQGFNEYQDL (118 aa)). 4-aspartylphosphate is present on aspartate 55. Residues 156 to 348 (RTVNTQLVAI…DKLLQYLASV (193 aa)) enclose the CheB-type methylesterase domain. Active-site residues include serine 168, histidine 194, and aspartate 290.

It belongs to the CheB family. Post-translationally, phosphorylated by CheA. Phosphorylation of the N-terminal regulatory domain activates the methylesterase activity.

The protein resides in the cytoplasm. It carries out the reaction [protein]-L-glutamate 5-O-methyl ester + H2O = L-glutamyl-[protein] + methanol + H(+). The enzyme catalyses L-glutaminyl-[protein] + H2O = L-glutamyl-[protein] + NH4(+). Its function is as follows. Involved in chemotaxis. Part of a chemotaxis signal transduction system that modulates chemotaxis in response to various stimuli. Catalyzes the demethylation of specific methylglutamate residues introduced into the chemoreceptors (methyl-accepting chemotaxis proteins or MCP) by CheR. Also mediates the irreversible deamidation of specific glutamine residues to glutamic acid. This Shewanella oneidensis (strain ATCC 700550 / JCM 31522 / CIP 106686 / LMG 19005 / NCIMB 14063 / MR-1) protein is Protein-glutamate methylesterase/protein-glutamine glutaminase 2.